The primary structure comprises 143 residues: Large ribosomal subunit protein uL13 (143 aa).

This sequence belongs to the universal ribosomal protein uL13 family. Part of the 50S ribosomal subunit.

Functionally, this protein is one of the early assembly proteins of the 50S ribosomal subunit, although it is not seen to bind rRNA by itself. It is important during the early stages of 50S assembly. The polypeptide is Large ribosomal subunit protein uL13 (Chloroflexus aggregans (strain MD-66 / DSM 9485)).